A 77-amino-acid chain; its full sequence is MWHLKLFAVLMICLLLLAQVDGSPIPQQSSAKRRPRRMTPFWRAVSLRPIGASCRDDSECITRLCRKRRCSLSVAQE.

Residues 1 to 22 (MWHLKLFAVLMICLLLLAQVDG) form the signal peptide. Positions 23–37 (SPIPQQSSAKRRPRR) are excised as a propeptide. Disulfide bonds link Cys54/Cys65 and Cys60/Cys70.

The protein belongs to the LEAP2 family.

Its subcellular location is the secreted. Its function is as follows. Has an antimicrobial activity. The sequence is that of Liver-expressed antimicrobial peptide 2 (LEAP2) from Bos taurus (Bovine).